The sequence spans 607 residues: Monocarboxylate transporter 7 (607 aa).

Residues 1-84 form a disordered region; the sequence is MRASGQGPQR…PAETGCSRSR (84 aa). Residues 1–105 lie on the Cytoplasmic side of the membrane; that stretch reads MRASGQGPQR…ANVYTQVPDG (105 aa). A helical membrane pass occupies residues 106–126; that stretch reads GWGWAVAVSFFFVEVFTYGII. Topologically, residues 127–146 are extracellular; that stretch reads KSFGVFFNDLMDSFDESNSK. The helical transmembrane segment at 147 to 167 threads the bilayer; sequence ISWIISICVFVLTFTAPLSTV. The Cytoplasmic segment spans residues 168-175; that stretch reads LSNRFGHR. A helical transmembrane segment spans residues 176 to 196; that stretch reads LVVMAGGLLISLGMITASFSQ. At 197 to 202 the chain is on the extracellular side; the sequence is RVYHMY. Residues 203-223 form a helical membrane-spanning segment; the sequence is ISIGVISGLGYCFSFLPTVTI. Topologically, residues 224–233 are cytoplasmic; it reads LSQYFDKRRS. Residues 234-254 traverse the membrane as a helical segment; it reads VVTAVASTGECFAVFAFAPAI. The Extracellular portion of the chain corresponds to 255 to 268; that stretch reads TALKEHIGWRYSLL. Residues 269-289 traverse the membrane as a helical segment; the sequence is FVGLLQLNIMVCGALLRPIII. The Cytoplasmic portion of the chain corresponds to 290 to 383; the sequence is QGPGQSPKAV…KEKSFICYAL (94 aa). A phosphoserine mark is found at S319, S322, S325, and S332. The chain crosses the membrane as a helical span at residues 384–404; the sequence is FGLFATLGFFAPSLYIIPLGI. The Extracellular segment spans residues 405–414; it reads SLGIDPDRAA. The chain crosses the membrane as a helical span at residues 415-435; sequence FLLSTMAIAEVFGRIGAGFVL. Residues 436-442 lie on the Cytoplasmic side of the membrane; that stretch reads NREPIRK. The helical transmembrane segment at 443 to 463 threads the bilayer; sequence IYIELICVILLTASLFAFTFA. Over 464 to 465 the chain is Extracellular; that stretch reads TE. A helical transmembrane segment spans residues 466 to 486; it reads FWGLMLCSVFFGSMVGTIGGT. Residues 487–507 lie on the Cytoplasmic side of the membrane; sequence HIPMLAEDDVVGIEKMSSAAG. Residues 508-528 traverse the membrane as a helical segment; the sequence is VYVFIQSISGLAGPPLAGLLV. The Extracellular portion of the chain corresponds to 529–536; the sequence is DQSKIYSR. The chain crosses the membrane as a helical span at residues 537-557; it reads AFYSCAAGMCLAAVCLALVRP. The Cytoplasmic portion of the chain corresponds to 558 to 607; it reads CKKGLCQNSHSGENQTDRQRGKALQDIPEDFLEMDLGKCEHRAHMKMDPV.

The protein belongs to the major facilitator superfamily. Monocarboxylate porter (TC 2.A.1.13) family. As to quaternary structure, forms functional complexes with BSG/CD147 or EMB/GP70 ancillary proteins.

The protein localises to the basolateral cell membrane. It catalyses the reaction taurine(out) = taurine(in). Functionally, monocarboxylate transporter selective for taurine. May associate with BSG/CD147 or EMB/GP70 ancillary proteins to mediate facilitative efflux or influx of taurine across the plasma membrane. The transport is pH- and sodium-independent. Rather low-affinity, is likely effective for taurine transport in tissues where taurine is present at high concentrations. In Mus musculus (Mouse), this protein is Monocarboxylate transporter 7.